Here is a 303-residue protein sequence, read N- to C-terminus: Pyridoxal 5'-phosphate synthase subunit PdxS (303 aa).

Residue aspartate 33 coordinates D-ribose 5-phosphate. Lysine 90 functions as the Schiff-base intermediate with D-ribose 5-phosphate in the catalytic mechanism. Glycine 162 is a binding site for D-ribose 5-phosphate. A D-glyceraldehyde 3-phosphate-binding site is contributed by arginine 174. Residues glycine 223 and 244-245 (GS) each bind D-ribose 5-phosphate.

The protein belongs to the PdxS/SNZ family. In the presence of PdxT, forms a dodecamer of heterodimers.

It carries out the reaction aldehydo-D-ribose 5-phosphate + D-glyceraldehyde 3-phosphate + L-glutamine = pyridoxal 5'-phosphate + L-glutamate + phosphate + 3 H2O + H(+). It functions in the pathway cofactor biosynthesis; pyridoxal 5'-phosphate biosynthesis. Catalyzes the formation of pyridoxal 5'-phosphate from ribose 5-phosphate (RBP), glyceraldehyde 3-phosphate (G3P) and ammonia. The ammonia is provided by the PdxT subunit. Can also use ribulose 5-phosphate and dihydroxyacetone phosphate as substrates, resulting from enzyme-catalyzed isomerization of RBP and G3P, respectively. The chain is Pyridoxal 5'-phosphate synthase subunit PdxS from Streptomyces coelicolor (strain ATCC BAA-471 / A3(2) / M145).